The following is a 789-amino-acid chain: Protein FLOWERING LOCUS D (789 aa).

The disordered stretch occupies residues 1–23 (MVSFSAPKKRRRGRSQRSMSSLN). An SWIRM domain is found at 76–177 (NKEATTEALL…FGIAQAIKDK (102 aa)). FAD-binding positions include Ser-195, Glu-214, Arg-216, Arg-222, and 240-243 (GGSV). Residue Lys-287 forms a Glycyl lysine isopeptide (Lys-Gly) (interchain with G-Cter in SUMO) linkage. FAD-binding positions include Glu-595, 604–605 (TM), and 607–612 (GAFVTG). Residues Lys-693 and Lys-770 each participate in a glycyl lysine isopeptide (Lys-Gly) (interchain with G-Cter in SUMO) cross-link.

This sequence belongs to the flavin monoamine oxidase family. Interacts with HDA6. It depends on FAD as a cofactor. Sumoylated at Lys-287, Lys-693 and Lys-770 by SIZ1. Sumoylation alters its activity and the histone H4 acetylation status of FLC locus, promoting FLC expression.

Its function is as follows. Probable histone demethylase that promotes flowering independently of the photoperiod and vernalization pathways by repressing FLOWERING LOCUS C (FLC), a floral repressor that blocks the transition from vegetative to reproductive development. Probably mediates histone H3 'Lys-4' demethylation at FLC locus. Seems to act in partial redundancy with LDL1 and LDL2 to repress FLC expression. Required for histone H4 deacetylation of FLC locus. May be a component of the histone deacetylase complex. Forms a histone deacetylase complex with HDA5, HDA6 and MSI4/FVE that represses FLC gene expression to control flowering time. Required for systemic acquired resistance (SAR) toward pathogenic bacteria (e.g. Pseudomonas syringae pv tomato DC3000 (avrPto)). Together with FLD and MSI4/FVE, contributes to dehydroabietinal-dependent (DA, a diterpenoid tricyclic diterpene) activation of flowering ans SAR. The chain is Protein FLOWERING LOCUS D from Arabidopsis thaliana (Mouse-ear cress).